We begin with the raw amino-acid sequence, 291 residues long: Phosphoribosylaminoimidazole-succinocarboxamide synthase (291 aa).

This sequence belongs to the SAICAR synthetase family.

The enzyme catalyses 5-amino-1-(5-phospho-D-ribosyl)imidazole-4-carboxylate + L-aspartate + ATP = (2S)-2-[5-amino-1-(5-phospho-beta-D-ribosyl)imidazole-4-carboxamido]succinate + ADP + phosphate + 2 H(+). It participates in purine metabolism; IMP biosynthesis via de novo pathway; 5-amino-1-(5-phospho-D-ribosyl)imidazole-4-carboxamide from 5-amino-1-(5-phospho-D-ribosyl)imidazole-4-carboxylate: step 1/2. This is Phosphoribosylaminoimidazole-succinocarboxamide synthase (ADE1) from Candida albicans (Yeast).